The sequence spans 434 residues: Glutamyl-tRNA reductase (434 aa).

Substrate is bound by residues 49 to 52, S114, 119 to 121, and Q125; these read TCNR and EPQ. The active-site Nucleophile is C50. 199 to 204 serves as a coordination point for NADP(+); that stretch reads GAGETI.

This sequence belongs to the glutamyl-tRNA reductase family. As to quaternary structure, homodimer.

It catalyses the reaction (S)-4-amino-5-oxopentanoate + tRNA(Glu) + NADP(+) = L-glutamyl-tRNA(Glu) + NADPH + H(+). It participates in porphyrin-containing compound metabolism; protoporphyrin-IX biosynthesis; 5-aminolevulinate from L-glutamyl-tRNA(Glu): step 1/2. Catalyzes the NADPH-dependent reduction of glutamyl-tRNA(Glu) to glutamate 1-semialdehyde (GSA). The protein is Glutamyl-tRNA reductase of Pasteurella multocida (strain Pm70).